The following is a 242-amino-acid chain: 1-(5-phosphoribosyl)-5-[(5-phosphoribosylamino)methylideneamino] imidazole-4-carboxamide isomerase (242 aa).

The Proton acceptor role is filled by Asp-8. Asp-129 serves as the catalytic Proton donor.

The protein belongs to the HisA/HisF family.

The protein resides in the cytoplasm. The enzyme catalyses 1-(5-phospho-beta-D-ribosyl)-5-[(5-phospho-beta-D-ribosylamino)methylideneamino]imidazole-4-carboxamide = 5-[(5-phospho-1-deoxy-D-ribulos-1-ylimino)methylamino]-1-(5-phospho-beta-D-ribosyl)imidazole-4-carboxamide. It functions in the pathway amino-acid biosynthesis; L-histidine biosynthesis; L-histidine from 5-phospho-alpha-D-ribose 1-diphosphate: step 4/9. The chain is 1-(5-phosphoribosyl)-5-[(5-phosphoribosylamino)methylideneamino] imidazole-4-carboxamide isomerase from Clostridium botulinum (strain Langeland / NCTC 10281 / Type F).